Consider the following 153-residue polypeptide: UPF0756 membrane protein Pjdr2_2290 (153 aa).

A run of 5 helical transmembrane segments spans residues 6–26 (LILV…IATA), 50–70 (LELG…SGKV), 75–95 (LIAA…AVAA), 111–131 (MVVG…GIPV), and 132–152 (GPLM…LMSG).

The protein belongs to the UPF0756 family.

It localises to the cell membrane. The protein is UPF0756 membrane protein Pjdr2_2290 of Paenibacillus sp. (strain JDR-2).